A 193-amino-acid chain; its full sequence is Erythropoietin (193 aa).

An N-terminal signal peptide occupies residues 1-27; the sequence is MGVHECPAWLWLLLSLLSLPLGLPVLG. 2 cysteine pairs are disulfide-bonded: cysteine 34–cysteine 188 and cysteine 56–cysteine 60. N-linked (GlcNAc...) asparagine glycosylation occurs at asparagine 51. 2 N-linked (GlcNAc...) asparagine glycosylation sites follow: asparagine 65 and asparagine 110. O-linked (GalNAc...) serine glycosylation is present at serine 153.

This sequence belongs to the EPO/TPO family. In terms of tissue distribution, produced by kidney or liver of adult mammals and by liver of fetal or neonatal mammals.

The protein resides in the secreted. In terms of biological role, hormone involved in the regulation of erythrocyte proliferation and differentiation and the maintenance of a physiological level of circulating erythrocyte mass. Binds to EPOR leading to EPOR dimerization and JAK2 activation thereby activating specific downstream effectors, including STAT1 and STAT3. The sequence is that of Erythropoietin (EPO) from Homo sapiens (Human).